A 466-amino-acid polypeptide reads, in one-letter code: Soluble pyridine nucleotide transhydrogenase (466 aa).

Glu36–Cys45 lines the FAD pocket.

Belongs to the class-I pyridine nucleotide-disulfide oxidoreductase family. FAD is required as a cofactor.

The protein resides in the cytoplasm. The catalysed reaction is NAD(+) + NADPH = NADH + NADP(+). Functionally, conversion of NADPH, generated by peripheral catabolic pathways, to NADH, which can enter the respiratory chain for energy generation. The sequence is that of Soluble pyridine nucleotide transhydrogenase from Vibrio parahaemolyticus serotype O3:K6 (strain RIMD 2210633).